The sequence spans 763 residues: Thyrotropin receptor (763 aa).

An N-terminal signal peptide occupies residues 1 to 21 (MRQTPLLQLALLLSLPRSLGG). The Extracellular portion of the chain corresponds to 22 to 412 (KGCPSPPCEC…EFNPCEDIMG (391 aa)). Cys31 and Cys41 are joined by a disulfide. N-linked (GlcNAc...) asparagine glycans are attached at residues Asn77 and Asn99. LRR repeat units lie at residues 100–124 (LSKM…ALKE), 125–150 (LPLL…VYST), 151–174 (DVFF…AFQG), 176–199 (CNET…AFNG), 201–223 (KLDA…AFGG), 225–248 (YSGP…GLEH), and 264–288 (PLTL…AFKN). N-linked (GlcNAc...) asparagine glycans are attached at residues Asn177 and Asn198. N-linked (GlcNAc...) asparagine glycosylation is present at Asn302. Tyr384 bears the Sulfotyrosine mark. The helical transmembrane segment at 413–440 (YKFLRIVVWFVSLLALLGNVFVLIILLT) threads the bilayer. Residues 441 to 449 (SHYKLTVPR) are Cytoplasmic-facing. Residues 450 to 472 (FLMCNLAFADFCMGMYLLLIASV) traverse the membrane as a helical segment. Over 473–493 (DLYTHSEYYNHAIDWQTGPGC) the chain is Extracellular. A disulfide bridge connects residues Cys493 and Cys568. Residues 494 to 516 (NAAGFFTVFASELSVYTLTVITL) traverse the membrane as a helical segment. Residues 517–536 (ERWYAITFAMRLDRKMRLRH) lie on the Cytoplasmic side of the membrane. The chain crosses the membrane as a helical span at residues 537 to 559 (AYAIMVGGWVCCFLLALLPLVGI). Residues 560–579 (SSYAKVSICLPMDTETPLAL) are Extracellular-facing. The helical transmembrane segment at 580–601 (AYIILVLLLNIVAFIIVCSCYV) threads the bilayer. Over 602–624 (KIYITVRNPQYNTGDKDTKIAKR) the chain is Cytoplasmic. The helical transmembrane segment at 625 to 648 (MAVLIFTDFMCMAPISFYALSALM) threads the bilayer. Over 649 to 659 (NKPLITVTNSK) the chain is Extracellular. A helical transmembrane segment spans residues 660–681 (ILLVLFYPLNSCANPFLYAIFT). The Cytoplasmic segment spans residues 682–763 (KTFQRDVFIL…ISKEYNQTVL (82 aa)). A PDZ-binding motif is present at residues 761 to 763 (TVL).

The protein belongs to the G-protein coupled receptor 1 family. FSH/LSH/TSH subfamily. In terms of assembly, interacts with heterodimer GPHA2:GPHB5; this interaction stimulates cAMP production. Interacts (via the PDZ-binding motif) with SCRIB; regulates TSHR trafficking and function. Post-translationally, glycosylated. Sulfated. Sulfation on Tyr-384 plays a role in thyrotropin receptor binding and activation.

The protein resides in the cell membrane. The protein localises to the basolateral cell membrane. Functionally, receptor for the thyroid-stimulating hormone (TSH) or thyrotropin. Also acts as a receptor for the heterodimeric glycoprotein hormone (GPHA2:GPHB5) or thyrostimulin. The activity of this receptor is mediated by G proteins which activate adenylate cyclase. Plays a central role in controlling thyroid cell metabolism. The protein is Thyrotropin receptor (TSHR) of Felis catus (Cat).